We begin with the raw amino-acid sequence, 1173 residues long: MPFSSYIGNSRRSSTGGGTGGWGQSLLPTALSKSKLAINRKPRKRTLVVNFIFANFFVIALTVSLLFFLLTLFHFGVPGPISSRFLTSRSNRIVKPRKNINRRPLNDSNSGAVVDITTKDLYDRIEFLDTDGGPWKQGWRVTYKDDEWEKEKLKIFVVPHSHNDPGWKLTVEEYYQRQSRHILDTIVETLSKDSRRKFIWEEMSYLERWWRDASPNKQEALTKLVKDGQLEIVGGGWVMNDEANSHYFAIIEQIAEGNMWLNDTIGVIPKNSWAIDPFGYSSTMAYLLRRMGFENMLIQRTHYELKKDLAQHKNLEYIWRQSWDAMETTDIFVHMMPFYSYDIPHTCGPEPAICCQFDFARMRGFKYELCPWGKHPVETTLENVQERALKLLDQYRKKSTLYRTNTLLIPLGDDFRYISIDEAEAQFRNYQMLFDHINSNPSLNAEAKFGTLEDYFRTVREEADRVNYSRPGEVGSGQVVGFPSLSGDFFTYADRQQDYWSGYYVSRPFFKAVDRVLEHTLRGAEIMMSFLLGYCHRIQCEKFPTSFTYKLTAARRNLALFQHHDGVTGTAKDYVVQDYGTRMHTSLQDLQIFMSKAIEVLLGIRHEKEKSDQSPSFFEAEQMRSKYDARPVHKPIAAREGNSHTVILFNPSEQTREEVVTVVVNRAEISVLDSNWTCVPSQISPEVQHDDTKLFTGRHRLYWKASIPALGLRTYFIANGNVECEKATPSKLKYASEFDPFPCPPPYSCSKLDNDVTEIRNEHQTLVFDVKNGSLRKIVHRNGSETVVGEEIGMYSSPESGAYLFKPDGEAQPIVQPDGHVVTSEGLLVQEVFSYPKTKWEKSPLSQKTRLYTGGNTLQDQVVEIEYHVELLGNDFDDRELIVRYKTDVDNKKVFYSDLNGFQMSRRETYDKIPLQGNYYPMPSLAFIQGSNGQRFSVHSRQSLGVASLKEGWLEIMLDRRLVRDDGRGLGQGVMDNRAMTVVFHLLAESNISQADPASNTNPRNPSLLSHLIGAHLNYPINTFIAKKPQDISVRVPQYGSFAPLAKPLPCDLHIVNFKVPRPSKYSQQLEEDKPRFALILNRRAWDSAYCHKGRQVNCTSMANEPVNFSDMFKDLAASKVKPTSLNLLQEDMEILGYDDQELPRDSSQPREGRVSISPMEIRAYKLELRPHK.

Positions Met-1–Gly-21 are disordered. The Cytoplasmic portion of the chain corresponds to Met-1–Asn-50. A helical; Signal-anchor transmembrane segment spans residues Phe-51–Thr-71. Residues Leu-72–Lys-1173 are Lumenal-facing. N-linked (GlcNAc...) asparagine glycosylation occurs at Asn-106. Zn(2+) is bound by residues His-162 and Asp-164. N-linked (GlcNAc...) asparagine glycosylation occurs at Asn-262. Asp-276 serves as a coordination point for Zn(2+). Residue Asp-276 is the Nucleophile of the active site. Asn-467 is a glycosylation site (N-linked (GlcNAc...) asparagine). His-564 is a binding site for Zn(2+). Asn-675, Asn-772, Asn-782, Asn-991, Asn-1098, and Asn-1108 each carry an N-linked (GlcNAc...) asparagine glycan.

The protein belongs to the glycosyl hydrolase 38 family. In terms of assembly, homodimer; disulfide-linked. Interacts with GALT1. Zn(2+) serves as cofactor. Post-translationally, glycosylated.

It localises to the golgi apparatus membrane. The enzyme catalyses N(4)-{beta-D-GlcNAc-(1-&gt;2)-alpha-D-Man-(1-&gt;3)-[alpha-D-Man-(1-&gt;3)-[alpha-D-Man-(1-&gt;6)]-alpha-D-Man-(1-&gt;6)]-beta-D-Man-(1-&gt;4)-beta-D-GlcNAc-(1-&gt;4)-beta-D-GlcNAc}-L-asparaginyl-[protein] + 2 H2O = 2 alpha-D-mannopyranose + an N(4)-{beta-D-GlcNAc-(1-&gt;2)-alpha-D-Man-(1-&gt;3)-[alpha-D-Man-(1-&gt;6)]-beta-D-Man-(1-&gt;4)-beta-D-GlcNAc-(1-&gt;4)-beta-D-GlcNAc}-L-asparaginyl-[protein]. The protein operates within protein modification; protein glycosylation. Inhibited by 1 mM Cu(2+) and by the class II alpha-mannosidase inhibitor swainsonine. Functionally, catalyzes the first committed step in the biosynthesis of complex N-glycans. It controls conversion of high mannose to complex N-glycans; the final hydrolytic step in the N-glycan maturation pathway. Converts GlcNAcMan(5)GlcNAc(2) (Man5Gn) into GlcNAcMan(3)GlcNAc(2) (MGn) by sequential removal of two alpha1,6- and alpha1,3-linked mannose residues from the alpha1,6-mannose branch of the substrate. To a lesser extent, also able to cleave beta1,2-xylosylated Man5Gn-glycopeptide (Man5GnX-GP) and pyridylaminated substrates Man5Gn-PA and Man5GnX-PA, but not active toward Man5-glycopeptide. Required for resistance to salt stress. This chain is Alpha-mannosidase 2, found in Arabidopsis thaliana (Mouse-ear cress).